A 302-amino-acid chain; its full sequence is Lipoyl synthase (302 aa).

The [4Fe-4S] cluster site is built by Cys44, Cys49, Cys55, Cys70, Cys74, Cys77, and Ser283. A Radical SAM core domain is found at Trp56–Leu272.

It belongs to the radical SAM superfamily. Lipoyl synthase family. [4Fe-4S] cluster is required as a cofactor.

It localises to the cytoplasm. It catalyses the reaction [[Fe-S] cluster scaffold protein carrying a second [4Fe-4S](2+) cluster] + N(6)-octanoyl-L-lysyl-[protein] + 2 oxidized [2Fe-2S]-[ferredoxin] + 2 S-adenosyl-L-methionine + 4 H(+) = [[Fe-S] cluster scaffold protein] + N(6)-[(R)-dihydrolipoyl]-L-lysyl-[protein] + 4 Fe(3+) + 2 hydrogen sulfide + 2 5'-deoxyadenosine + 2 L-methionine + 2 reduced [2Fe-2S]-[ferredoxin]. It functions in the pathway protein modification; protein lipoylation via endogenous pathway; protein N(6)-(lipoyl)lysine from octanoyl-[acyl-carrier-protein]: step 2/2. In terms of biological role, catalyzes the radical-mediated insertion of two sulfur atoms into the C-6 and C-8 positions of the octanoyl moiety bound to the lipoyl domains of lipoate-dependent enzymes, thereby converting the octanoylated domains into lipoylated derivatives. The polypeptide is Lipoyl synthase (Orientia tsutsugamushi (strain Ikeda) (Rickettsia tsutsugamushi)).